The following is an 85-amino-acid chain: Large ribosomal subunit protein bL31B (85 aa).

Belongs to the bacterial ribosomal protein bL31 family. Type B subfamily. As to quaternary structure, part of the 50S ribosomal subunit.

The protein is Large ribosomal subunit protein bL31B of Stutzerimonas stutzeri (strain A1501) (Pseudomonas stutzeri).